The chain runs to 931 residues: Glycine dehydrogenase (decarboxylating) (931 aa).

At Lys684 the chain carries N6-(pyridoxal phosphate)lysine.

This sequence belongs to the GcvP family. The glycine cleavage system is composed of four proteins: P, T, L and H. Requires pyridoxal 5'-phosphate as cofactor.

The catalysed reaction is N(6)-[(R)-lipoyl]-L-lysyl-[glycine-cleavage complex H protein] + glycine + H(+) = N(6)-[(R)-S(8)-aminomethyldihydrolipoyl]-L-lysyl-[glycine-cleavage complex H protein] + CO2. Functionally, the glycine cleavage system catalyzes the degradation of glycine. The P protein binds the alpha-amino group of glycine through its pyridoxal phosphate cofactor; CO(2) is released and the remaining methylamine moiety is then transferred to the lipoamide cofactor of the H protein. The protein is Glycine dehydrogenase (decarboxylating) of Bartonella henselae (strain ATCC 49882 / DSM 28221 / CCUG 30454 / Houston 1) (Rochalimaea henselae).